The primary structure comprises 180 residues: tRNA (cytidine(56)-2'-O)-methyltransferase (180 aa).

S-adenosyl-L-methionine is bound by residues Leu-85, 114 to 118 (GAEKV), and 132 to 139 (VGNQPHSE).

Belongs to the aTrm56 family. As to quaternary structure, homodimer.

It is found in the cytoplasm. It carries out the reaction cytidine(56) in tRNA + S-adenosyl-L-methionine = 2'-O-methylcytidine(56) in tRNA + S-adenosyl-L-homocysteine + H(+). Its function is as follows. Specifically catalyzes the AdoMet-dependent 2'-O-ribose methylation of cytidine at position 56 in tRNAs. The protein is tRNA (cytidine(56)-2'-O)-methyltransferase of Thermococcus kodakarensis (strain ATCC BAA-918 / JCM 12380 / KOD1) (Pyrococcus kodakaraensis (strain KOD1)).